A 528-amino-acid polypeptide reads, in one-letter code: Protein MGF 505-7R (528 aa).

ANK repeat units lie at residues 129-158 (ECDL…LLNV), 261-290 (HVNR…VPHK), and 292-322 (IERM…KVKN).

This sequence belongs to the asfivirus MGF 505 family. Interacts with host STING1. Interacts with host JAK1; this interaction leads to JAK1 degradation. Interacts with host JAK2; this interaction leads to JAK2 degradation. Interacts with host RELA; this interaction inhibits NF-kappa-B promoter activity.

The protein localises to the host cytoplasm. Plays a role in virus cell tropism, and may be required for efficient virus replication in macrophages. Interferes with host NF-kappa-B promoter activity mediated by TLR8. Mechanistically, inhibits the phosphorylation and subsequent nuclear translocation of host NF-kappa-B RELA subunit downstream of TLR8. Promotes the expression of the autophagy-related protein host ULK1 to degrade host STING and inhibit the interferon response. Also inhibits JAK1- and JAK2-mediated signaling and thus negatively regulates the IFN-gamma signaling. The chain is Protein MGF 505-7R from Ornithodoros (relapsing fever ticks).